The primary structure comprises 416 residues: Enterobactin exporter EntS (416 aa).

The Cytoplasmic portion of the chain corresponds to 1–21; sequence MNKQSWLLNLSLLKTHPAFRA. A helical membrane pass occupies residues 22-42; sequence VFLARFISIVSLGLLGVAVPV. Residues 43–55 lie on the Periplasmic side of the membrane; it reads QIQMMTHSTWQVG. The chain crosses the membrane as a helical span at residues 56-76; it reads LSVTLTGGAMFVGLMVGGVLA. At 77-83 the chain is on the cytoplasmic side; sequence DRYERKK. The helical transmembrane segment at 84–104 threads the bilayer; it reads VILLARGTCGIGFIGLCLNAL. The Periplasmic segment spans residues 105-109; it reads LPEPS. A helical membrane pass occupies residues 110–130; it reads LLAIYLLGLWDGFFASLGVTA. Residues 131–156 lie on the Cytoplasmic side of the membrane; the sequence is LLAATPALVGRENLMQAGAITMLTVR. The helical transmembrane segment at 157-177 threads the bilayer; sequence LGSVISPMIGGLLLATGGVAW. Asn178 is a topological domain (periplasmic). The helical transmembrane segment at 179–199 threads the bilayer; it reads YGLAAAGTFITLLPLLSLPAL. At 200–218 the chain is on the cytoplasmic side; it reads PPPPQPREHPLKSLLAGFR. The chain crosses the membrane as a helical span at residues 219 to 239; it reads FLLASPLVGGIALLGGLLTMA. Topologically, residues 240-256 are periplasmic; the sequence is SAVRVLYPALADNWQMS. A helical transmembrane segment spans residues 257–277; it reads AAQIGFLYAAIPLGAAIGALT. The Cytoplasmic segment spans residues 278–287; the sequence is SGKLAHSARP. Residues 288 to 307 traverse the membrane as a helical segment; that stretch reads GLLMLLSTLGSFLAIGLFGL. At 308–313 the chain is on the periplasmic side; that stretch reads MPMWIL. The chain crosses the membrane as a helical span at residues 314–336; it reads GVVCLALFGWLSAVSSLLQYTML. At 337 to 356 the chain is on the cytoplasmic side; that stretch reads QTQTPEAMLGRINGLWTAQN. A helical transmembrane segment spans residues 357–377; sequence VTGDAIGAALLGGLGAMMTPV. Residue Ala378 is a topological domain, periplasmic. A helical membrane pass occupies residues 379-399; that stretch reads SASASGFGLLIIGVLLLLVLV. Residues 400-416 are Cytoplasmic-facing; sequence ELRRFRQTPPQMTASDS.

This sequence belongs to the major facilitator superfamily. EntS (TC 2.A.1.38) family.

The protein localises to the cell inner membrane. In terms of biological role, component of an export pathway for enterobactin. The protein is Enterobactin exporter EntS of Escherichia coli O7:K1 (strain IAI39 / ExPEC).